A 100-amino-acid chain; its full sequence is Putative antiporter subunit mnhF2 (100 aa).

Transmembrane regions (helical) follow at residues 5-25, 38-60, and 65-87; these read FTQI…LVCL, VVSF…VIFN, and LDSI…RFIG.

The protein belongs to the CPA3 antiporters (TC 2.A.63) subunit F family. In terms of assembly, may form a heterooligomeric complex that consists of seven subunits: mnhA2, mnhB2, mnhC2, mnhD2, mnhE2, mnhF2 and mnhG2.

The protein localises to the cell membrane. The chain is Putative antiporter subunit mnhF2 (mnhF2) from Staphylococcus epidermidis (strain ATCC 35984 / DSM 28319 / BCRC 17069 / CCUG 31568 / BM 3577 / RP62A).